Here is an 805-residue protein sequence, read N- to C-terminus: MKYDFSHTEKKWQAYWQEHGTFQAEEGQEKPKYYVLDMFPYPSGSGLHVGHLEGYTASDIVARYRRSRGNNVLHPMGWDAFGLPAEQYAIKTGTHPSLTTENNIRSFRETLQAMGFSYDWSREINTTDPGYFRWTQWIFLKLYEMGLAYQSEVDVNWCVELRAVLANEEVEEKIAEGLTVVRRPLRQWVLKITAYAERLLLDLDGLDWPENVKQMQRNWIGRSEGVEVDFELRCHRKMLRVYTTRPDTLFGATYLVISPEHPMAEKLATAPQLVEVKNYISKAKLKTELERTGLQKDKTGVFTGSYAINPANGEALPVWISDFVLTSYGTGAIMSVPAHDSRDWEFAKKFGLPIVEVVKSPHDVQDAVYEGKDSTAVNSSNSEISLDGLAFPEAFERMASWLELKKCGERKVNYRLRDWIFSRQRYWGEPIPVKHYEDGSLGTETDLPLRLPEVEAYQPTETGESPLANIPEWLYGTDGKGAFRRETNTMPQWAGSCWYYLRFIDPRNSEHLVDAEKEHYWMNVDLYIGGAEHAVLHLLYARFWHKVLYDLKVVSTKEPFQKLFNQGMILGEDGEKMSKSRGNVIPADHVLEKYGADAVRLYEMFLGPLEQVKPWNTNGIEGVSRFLNRVWRLVHPDTEGPAAVLDEAAMPGELLRRMHKTVKKVREDTECLKFNTAIAEMMVFVNDLHRTGNRNREAIETLVLLLAPYAPHISEELWEALGHPESIARAPFPTFDPALAANDVLTIAVQVNGKLRGTFEAAKDASKEEMLEAARAVESVRKFIEGSTVVKEIVVPGKLINFAVK.

The 'HIGH' region signature appears at 40-51 (PYPSGSGLHVGH). The 'KMSKS' region signature appears at 576-580 (KMSKS). K579 contacts ATP.

Belongs to the class-I aminoacyl-tRNA synthetase family.

The protein localises to the cytoplasm. It catalyses the reaction tRNA(Leu) + L-leucine + ATP = L-leucyl-tRNA(Leu) + AMP + diphosphate. This Chlorobium luteolum (strain DSM 273 / BCRC 81028 / 2530) (Pelodictyon luteolum) protein is Leucine--tRNA ligase.